We begin with the raw amino-acid sequence, 65 residues long: Large ribosomal subunit protein bL35 (65 aa).

It belongs to the bacterial ribosomal protein bL35 family.

In Phytoplasma mali (strain AT), this protein is Large ribosomal subunit protein bL35.